The following is a 399-amino-acid chain: Exodeoxyribonuclease 7 large subunit (399 aa).

It belongs to the XseA family. In terms of assembly, heterooligomer composed of large and small subunits.

It localises to the cytoplasm. The enzyme catalyses Exonucleolytic cleavage in either 5'- to 3'- or 3'- to 5'-direction to yield nucleoside 5'-phosphates.. Its function is as follows. Bidirectionally degrades single-stranded DNA into large acid-insoluble oligonucleotides, which are then degraded further into small acid-soluble oligonucleotides. The sequence is that of Exodeoxyribonuclease 7 large subunit from Clostridium beijerinckii (strain ATCC 51743 / NCIMB 8052) (Clostridium acetobutylicum).